Here is a 391-residue protein sequence, read N- to C-terminus: Lipoyl synthase, mitochondrial (391 aa).

Residues methionine 1–valine 44 constitute a mitochondrion transit peptide. Residues cysteine 120, cysteine 125, cysteine 131, cysteine 150, cysteine 154, cysteine 157, and serine 365 each coordinate [4Fe-4S] cluster. The Radical SAM core domain maps to lysine 135 to leucine 354.

Belongs to the radical SAM superfamily. Lipoyl synthase family. It depends on [4Fe-4S] cluster as a cofactor.

The protein localises to the mitochondrion. It carries out the reaction [[Fe-S] cluster scaffold protein carrying a second [4Fe-4S](2+) cluster] + N(6)-octanoyl-L-lysyl-[protein] + 2 oxidized [2Fe-2S]-[ferredoxin] + 2 S-adenosyl-L-methionine + 4 H(+) = [[Fe-S] cluster scaffold protein] + N(6)-[(R)-dihydrolipoyl]-L-lysyl-[protein] + 4 Fe(3+) + 2 hydrogen sulfide + 2 5'-deoxyadenosine + 2 L-methionine + 2 reduced [2Fe-2S]-[ferredoxin]. The protein operates within protein modification; protein lipoylation via endogenous pathway; protein N(6)-(lipoyl)lysine from octanoyl-[acyl-carrier-protein]: step 2/2. Catalyzes the radical-mediated insertion of two sulfur atoms into the C-6 and C-8 positions of the octanoyl moiety bound to the lipoyl domains of lipoate-dependent enzymes, thereby converting the octanoylated domains into lipoylated derivatives. In Clavispora lusitaniae (strain ATCC 42720) (Yeast), this protein is Lipoyl synthase, mitochondrial.